Reading from the N-terminus, the 191-residue chain is Putative glutathione-dependent formaldehyde-activating enzyme (191 aa).

The region spanning 20 to 166 (FAGGNLYCKC…FKAVGLETYD (147 aa)) is the CENP-V/GFA domain. 7 residues coordinate Zn(2+): cysteine 27, cysteine 29, cysteine 48, cysteine 50, cysteine 53, cysteine 95, and cysteine 98.

The protein belongs to the Gfa family. Requires Zn(2+) as cofactor.

It carries out the reaction S-(hydroxymethyl)glutathione = glutathione + formaldehyde. The protein operates within one-carbon metabolism; formaldehyde degradation; formate from formaldehyde (glutathione route): step 1/3. Catalyzes the condensation of formaldehyde and glutathione to S-hydroxymethylglutathione. The sequence is that of Putative glutathione-dependent formaldehyde-activating enzyme from Aspergillus terreus (strain NIH 2624 / FGSC A1156).